The following is a 235-amino-acid chain: Small ribosomal subunit protein eS6 (235 aa).

Ser-229 and Ser-230 each carry phosphoserine.

It belongs to the eukaryotic ribosomal protein eS6 family. Phosphorylated.

In Kluyveromyces marxianus (Yeast), this protein is Small ribosomal subunit protein eS6 (RPS6).